The primary structure comprises 113 residues: UPF0416 protein RF_0879 (113 aa).

It belongs to the UPF0416 family.

In Rickettsia felis (strain ATCC VR-1525 / URRWXCal2) (Rickettsia azadi), this protein is UPF0416 protein RF_0879.